The following is a 1439-amino-acid chain: Gag-Pol polyprotein (1439 aa).

A lipid anchor (N-myristoyl glycine; by host) is attached at glycine 2. The segment at 7 to 31 (ILRGEKLDAWEKIKLRPGGKKHYML) is interaction with Gp41. Residues 8 to 43 (LRGEKLDAWEKIKLRPGGKKHYMLKHLVWANRELEK) form an interaction with host CALM1 region. The interval 12–19 (KLDAWEKI) is interaction with host AP3D1. An interaction with membrane phosphatidylinositol 4,5-bisphosphate and RNA region spans residues 14–33 (DAWEKIKLRPGGKKHYMLKH). The short motif at 16–22 (WEKIKLR) is the Nuclear export signal element. The Nuclear localization signal signature appears at 26-32 (KKHYMLK). The interaction with membrane phosphatidylinositol 4,5-bisphosphate stretch occupies residues 73-77 (EELKS). The disordered stretch occupies residues 105–128 (EEEQNESQQKTQQAGAADRGKDSQ). Tyrosine 130 carries the phosphotyrosine; by host modification. The interval 187 to 225 (NTVGGHQAAMQMLKDTINEEAAEWDRLHPVHAGPVAPGQ) is interaction with human PPIA/CYPA and NUP153. Residues 275-361 (YSPVSILDIK…GGPAHKARVL (87 aa)) are dimerization/Multimerization of capsid protein p24. 2 CCHC-type zinc fingers span residues 387-404 (IKCF…NCRA) and 408-425 (KGCW…DCTE). The interval 441–485 (KAREFPSEQTRANSPTRESQTRANSPTTRELQVRGSNTFSEAGAE) is disordered. The span at 447–480 (SEQTRANSPTRESQTRANSPTTRELQVRGSNTFS) shows a compositional bias: polar residues. A dimerization of protease region spans residues 493–497 (PQITL). The region spanning 512 to 581 (KEALLDTGAD…TPVNIIGRNM (70 aa)) is the Peptidase A2 domain. The For protease activity; shared with dimeric partner role is filled by aspartate 517. 2 dimerization of protease regions span residues 541–547 (GIGGFIK) and 580–592 (NMLT…LNFP). The Reverse transcriptase domain maps to 635–825 (EGKISRIGPE…PPFLWMGYEL (191 aa)). Residues aspartate 701, aspartate 776, and aspartate 777 each contribute to the Mg(2+) site. An RT 'primer grip' region spans residues 818–826 (FLWMGYELH). The Tryptophan repeat motif signature appears at 989–1005 (WEAWWTDYWQATWIPEW). An RNase H type-1 domain is found at 1025–1148 (IAGVETFYVD…VDKLVSSGIR (124 aa)). Aspartate 1034, glutamate 1069, aspartate 1089, and aspartate 1140 together coordinate Mg(2+). The Integrase-type zinc finger occupies 1154-1195 (DGIDKAQEEHEKYHSNWRAMANEFNIPPVVPKEIVACCDKCQ). Residues histidine 1163, histidine 1167, cysteine 1191, and cysteine 1194 each contribute to the Zn(2+) site. The 151-residue stretch at 1205 to 1355 (VNCSPGIWQL…SAGERIIDII (151 aa)) folds into the Integrase catalytic domain. Mg(2+) is bound by residues aspartate 1215, aspartate 1267, and glutamate 1303. Residues 1374-1421 (FRVYYRDSRDPIWKGPAKLLWKGEGAVVIQDNSDIKVVPRRKAKIIRD) constitute a DNA-binding region (integrase-type).

In terms of assembly, homotrimer; further assembles as hexamers of trimers. Interacts with gp41 (via C-terminus). Interacts with host CALM1; this interaction induces a conformational change in the Matrix protein, triggering exposure of the myristate group. Interacts with host AP3D1; this interaction allows the polyprotein trafficking to multivesicular bodies during virus assembly. Part of the pre-integration complex (PIC) which is composed of viral genome, matrix protein, Vpr and integrase. Homodimer; the homodimer further multimerizes as homohexamers or homopentamers. Interacts with human PPIA/CYPA; This interaction stabilizes the capsid. Interacts with human NUP153. Interacts with host PDZD8; this interaction stabilizes the capsid. Interacts with monkey TRIM5; this interaction destabilizes the capsid. As to quaternary structure, homodimer, whose active site consists of two apposed aspartic acid residues. In terms of assembly, heterodimer of p66 RT and p51 RT (RT p66/p51). Heterodimerization of RT is essential for DNA polymerase activity. The overall folding of the subdomains is similar in p66 RT and p51 RT but the spatial arrangements of the subdomains are dramatically different. Homotetramer; may further associate as a homohexadecamer. Part of the pre-integration complex (PIC) which is composed of viral genome, matrix protein, Vpr and integrase. Interacts with human SMARCB1/INI1 and human PSIP1/LEDGF isoform 1. Interacts with human KPNA3; this interaction might play a role in nuclear import of the pre-integration complex. Interacts with human NUP153; this interaction might play a role in nuclear import of the pre-integration complex. Mg(2+) serves as cofactor. In terms of processing, specific enzymatic cleavages by the viral protease yield mature proteins. The protease is released by autocatalytic cleavage. The polyprotein is cleaved during and after budding, this process is termed maturation. Proteolytic cleavage of p66 RT removes the RNase H domain to yield the p51 RT subunit. Nucleocapsid protein p7 might be further cleaved after virus entry. Post-translationally, tyrosine phosphorylated presumably in the virion by a host kinase. Phosphorylation is apparently not a major regulator of membrane association. Phosphorylated possibly by host MAPK1; this phosphorylation is necessary for Pin1-mediated virion uncoating. In terms of processing, methylated by host PRMT6, impairing its function by reducing RNA annealing and the initiation of reverse transcription.

It localises to the host cell membrane. It is found in the host endosome. Its subcellular location is the host multivesicular body. The protein resides in the virion membrane. The protein localises to the host nucleus. It localises to the host cytoplasm. It is found in the virion. It carries out the reaction Specific for a P1 residue that is hydrophobic, and P1' variable, but often Pro.. It catalyses the reaction Endohydrolysis of RNA in RNA/DNA hybrids. Three different cleavage modes: 1. sequence-specific internal cleavage of RNA. Human immunodeficiency virus type 1 and Moloney murine leukemia virus enzymes prefer to cleave the RNA strand one nucleotide away from the RNA-DNA junction. 2. RNA 5'-end directed cleavage 13-19 nucleotides from the RNA end. 3. DNA 3'-end directed cleavage 15-20 nucleotides away from the primer terminus.. The catalysed reaction is 3'-end directed exonucleolytic cleavage of viral RNA-DNA hybrid.. The enzyme catalyses DNA(n) + a 2'-deoxyribonucleoside 5'-triphosphate = DNA(n+1) + diphosphate. Protease: The viral protease is inhibited by many synthetic protease inhibitors (PIs), such as amprenavir, atazanavir, indinavir, loprinavir, nelfinavir, ritonavir and saquinavir. Use of protease inhibitors in tritherapy regimens permit more ambitious therapeutic strategies. Reverse transcriptase/ribonuclease H: RT can be inhibited either by nucleoside RT inhibitors (NRTIs) or by non nucleoside RT inhibitors (NNRTIs). NRTIs act as chain terminators, whereas NNRTIs inhibit DNA polymerization by binding a small hydrophobic pocket near the RT active site and inducing an allosteric change in this region. Classical NRTIs are abacavir, adefovir (PMEA), didanosine (ddI), lamivudine (3TC), stavudine (d4T), tenofovir (PMPA), zalcitabine (ddC), and zidovudine (AZT). Classical NNRTIs are atevirdine (BHAP U-87201E), delavirdine, efavirenz (DMP-266), emivirine (I-EBU), and nevirapine (BI-RG-587). The tritherapies used as a basic effective treatment of AIDS associate two NRTIs and one NNRTI. Functionally, mediates, with Gag polyprotein, the essential events in virion assembly, including binding the plasma membrane, making the protein-protein interactions necessary to create spherical particles, recruiting the viral Env proteins, and packaging the genomic RNA via direct interactions with the RNA packaging sequence (Psi). Gag-Pol polyprotein may regulate its own translation, by the binding genomic RNA in the 5'-UTR. At low concentration, the polyprotein would promote translation, whereas at high concentration, the polyprotein would encapsidate genomic RNA and then shut off translation. Its function is as follows. Targets the polyprotein to the plasma membrane via a multipartite membrane-binding signal, that includes its myristoylated N-terminus. Matrix protein is part of the pre-integration complex. Implicated in the release from host cell mediated by Vpu. Binds to RNA. Forms the conical core that encapsulates the genomic RNA-nucleocapsid complex in the virion. Most core are conical, with only 7% tubular. The core is constituted by capsid protein hexamer subunits. The core is disassembled soon after virion entry. Host restriction factors such as TRIM5-alpha or TRIMCyp bind retroviral capsids and cause premature capsid disassembly, leading to blocks in reverse transcription. Capsid restriction by TRIM5 is one of the factors which restricts HIV-1 to the human species. Host PIN1 apparently facilitates the virion uncoating. On the other hand, interactions with PDZD8 or CYPA stabilize the capsid. In terms of biological role, encapsulates and protects viral dimeric unspliced genomic RNA (gRNA). Binds these RNAs through its zinc fingers. Acts as a nucleic acid chaperone which is involved in rearangement of nucleic acid secondary structure during gRNA retrotranscription. Also facilitates template switch leading to recombination. As part of the polyprotein, participates in gRNA dimerization, packaging, tRNA incorporation and virion assembly. Functionally, aspartyl protease that mediates proteolytic cleavages of Gag and Gag-Pol polyproteins during or shortly after the release of the virion from the plasma membrane. Cleavages take place as an ordered, step-wise cascade to yield mature proteins. This process is called maturation. Displays maximal activity during the budding process just prior to particle release from the cell. Also cleaves Nef and Vif, probably concomitantly with viral structural proteins on maturation of virus particles. Hydrolyzes host EIF4GI and PABP1 in order to shut off the capped cellular mRNA translation. The resulting inhibition of cellular protein synthesis serves to ensure maximal viral gene expression and to evade host immune response. Also mediates cleavage of host YTHDF3. Mediates cleavage of host CARD8, thereby activating the CARD8 inflammasome, leading to the clearance of latent HIV-1 in patient CD4(+) T-cells after viral reactivation; in contrast, HIV-1 can evade CARD8-sensing when its protease remains inactive in infected cells prior to viral budding. Its function is as follows. Multifunctional enzyme that converts the viral RNA genome into dsDNA in the cytoplasm, shortly after virus entry into the cell. This enzyme displays a DNA polymerase activity that can copy either DNA or RNA templates, and a ribonuclease H (RNase H) activity that cleaves the RNA strand of RNA-DNA heteroduplexes in a partially processive 3' to 5' endonucleasic mode. Conversion of viral genomic RNA into dsDNA requires many steps. A tRNA(3)-Lys binds to the primer-binding site (PBS) situated at the 5'-end of the viral RNA. RT uses the 3' end of the tRNA primer to perform a short round of RNA-dependent minus-strand DNA synthesis. The reading proceeds through the U5 region and ends after the repeated (R) region which is present at both ends of viral RNA. The portion of the RNA-DNA heteroduplex is digested by the RNase H, resulting in a ssDNA product attached to the tRNA primer. This ssDNA/tRNA hybridizes with the identical R region situated at the 3' end of viral RNA. This template exchange, known as minus-strand DNA strong stop transfer, can be either intra- or intermolecular. RT uses the 3' end of this newly synthesized short ssDNA to perform the RNA-dependent minus-strand DNA synthesis of the whole template. RNase H digests the RNA template except for two polypurine tracts (PPTs) situated at the 5'-end and near the center of the genome. It is not clear if both polymerase and RNase H activities are simultaneous. RNase H probably can proceed both in a polymerase-dependent (RNA cut into small fragments by the same RT performing DNA synthesis) and a polymerase-independent mode (cleavage of remaining RNA fragments by free RTs). Secondly, RT performs DNA-directed plus-strand DNA synthesis using the PPTs that have not been removed by RNase H as primers. PPTs and tRNA primers are then removed by RNase H. The 3' and 5' ssDNA PBS regions hybridize to form a circular dsDNA intermediate. Strand displacement synthesis by RT to the PBS and PPT ends produces a blunt ended, linear dsDNA copy of the viral genome that includes long terminal repeats (LTRs) at both ends. Catalyzes viral DNA integration into the host chromosome, by performing a series of DNA cutting and joining reactions. This enzyme activity takes place after virion entry into a cell and reverse transcription of the RNA genome in dsDNA. The first step in the integration process is 3' processing. This step requires a complex comprising the viral genome, matrix protein, Vpr and integrase. This complex is called the pre-integration complex (PIC). The integrase protein removes 2 nucleotides from each 3' end of the viral DNA, leaving recessed CA OH's at the 3' ends. In the second step, the PIC enters cell nucleus. This process is mediated through integrase and Vpr proteins, and allows the virus to infect a non dividing cell. This ability to enter the nucleus is specific of lentiviruses, other retroviruses cannot and rely on cell division to access cell chromosomes. In the third step, termed strand transfer, the integrase protein joins the previously processed 3' ends to the 5' ends of strands of target cellular DNA at the site of integration. The 5'-ends are produced by integrase-catalyzed staggered cuts, 5 bp apart. A Y-shaped, gapped, recombination intermediate results, with the 5'-ends of the viral DNA strands and the 3' ends of target DNA strands remaining unjoined, flanking a gap of 5 bp. The last step is viral DNA integration into host chromosome. This involves host DNA repair synthesis in which the 5 bp gaps between the unjoined strands are filled in and then ligated. Since this process occurs at both cuts flanking the HIV genome, a 5 bp duplication of host DNA is produced at the ends of HIV-1 integration. Alternatively, Integrase may catalyze the excision of viral DNA just after strand transfer, this is termed disintegration. This Human immunodeficiency virus type 1 group M subtype C (isolate ETH2220) (HIV-1) protein is Gag-Pol polyprotein (gag-pol).